A 739-amino-acid chain; its full sequence is Thiamine biosynthesis multifunctional protein ThiED (739 aa).

A thiamine-phosphate synthase region spans residues 1–210; sequence MTDFSLYLVT…PSPAEAAREL (210 aa). 4-amino-2-methyl-5-(diphosphooxymethyl)pyrimidine contacts are provided by residues 37–41 and N69; that span reads QLRDK. Mg(2+) contacts are provided by D70 and D88. T107 is a 4-amino-2-methyl-5-(diphosphooxymethyl)pyrimidine binding site. 140–142 provides a ligand contact to 2-[(2R,5Z)-2-carboxy-4-methylthiazol-5(2H)-ylidene]ethyl phosphate; sequence TDT. K143 is a 4-amino-2-methyl-5-(diphosphooxymethyl)pyrimidine binding site. 2-[(2R,5Z)-2-carboxy-4-methylthiazol-5(2H)-ylidene]ethyl phosphate contacts are provided by residues G174 and 194-195; that span reads VS. The interval 226 to 481 is hydroxymethylpyrimidine/phosphomethylpyrimidine kinase; the sequence is LTIAGTDPTG…GSGSGPVDHF (256 aa). Q263 provides a ligand contact to 4-amino-5-hydroxymethyl-2-methylpyrimidine. The tract at residues 527–739 is thiaminase-2; the sequence is YTRALWEATG…FDQATRQGWN (213 aa).

The protein in the N-terminal section; belongs to the thiamine-phosphate synthase family. This sequence in the central section; belongs to the ThiD family. In the C-terminal section; belongs to the thiaminase-2 family. Requires Mg(2+) as cofactor.

It carries out the reaction 2-[(2R,5Z)-2-carboxy-4-methylthiazol-5(2H)-ylidene]ethyl phosphate + 4-amino-2-methyl-5-(diphosphooxymethyl)pyrimidine + 2 H(+) = thiamine phosphate + CO2 + diphosphate. The catalysed reaction is 2-(2-carboxy-4-methylthiazol-5-yl)ethyl phosphate + 4-amino-2-methyl-5-(diphosphooxymethyl)pyrimidine + 2 H(+) = thiamine phosphate + CO2 + diphosphate. The enzyme catalyses 4-methyl-5-(2-phosphooxyethyl)-thiazole + 4-amino-2-methyl-5-(diphosphooxymethyl)pyrimidine + H(+) = thiamine phosphate + diphosphate. It catalyses the reaction 4-amino-5-hydroxymethyl-2-methylpyrimidine + ATP = 4-amino-2-methyl-5-(phosphooxymethyl)pyrimidine + ADP + H(+). It carries out the reaction 4-amino-2-methyl-5-(phosphooxymethyl)pyrimidine + ATP = 4-amino-2-methyl-5-(diphosphooxymethyl)pyrimidine + ADP. The protein operates within cofactor biosynthesis; thiamine diphosphate biosynthesis; 4-amino-2-methyl-5-diphosphomethylpyrimidine from 5-amino-1-(5-phospho-D-ribosyl)imidazole: step 3/3. It functions in the pathway cofactor biosynthesis; thiamine diphosphate biosynthesis; thiamine phosphate from 4-amino-2-methyl-5-diphosphomethylpyrimidine and 4-methyl-5-(2-phosphoethyl)-thiazole: step 1/1. In terms of biological role, condenses 4-methyl-5-(beta-hydroxyethyl)thiazole monophosphate (THZ-P) and 2-methyl-4-amino-5-hydroxymethyl pyrimidine pyrophosphate (HMP-PP) to form thiamine monophosphate (TMP). Catalyzes the phosphorylation of hydroxymethylpyrimidine phosphate (HMP-P) to HMP-PP, and of HMP to HMP-P. The protein is Thiamine biosynthesis multifunctional protein ThiED (thiED) of Corynebacterium efficiens (strain DSM 44549 / YS-314 / AJ 12310 / JCM 11189 / NBRC 100395).